Consider the following 285-residue polypeptide: Gas vesicle protein C2 (285 aa).

6 repeat units span residues 22–52 (EAMD…RDMR), 53–84 (AAVD…EATA), 85–122 (AAFD…RAVT), 123–155 (TDFE…TAKQ), 156–188 (EGFE…DDTA), and 189–220 (ASFA…QTDV). The interval 22-220 (EAMDAYAEEF…ADDTTAQTDV (199 aa)) is 6 X approximate tandem repeats.

It belongs to the halobacterial gas vesicle GvpC family.

The protein localises to the gas vesicle. In terms of biological role, confers stability, involved in shaping gas vesicles (GV), hollow, gas filled proteinaceous nanostructures. GVs allow positioning of halobacteria at an optimal depth for growth in the poorly aerated, shallow brine pools of their habitat. Expression of 2 c-vac DNA fragments containing 2 divergently transcribed regions (gvpE-gvpF-gvpG-gvpH-gvpI-gvpJ-gvpK-gvpL-gvpM and gvpA-gvpC-gvpN-gvpO) allows H.volcanii to produce gas vesicles. The protein is Gas vesicle protein C2 of Halobacterium salinarum (strain ATCC 700922 / JCM 11081 / NRC-1) (Halobacterium halobium).